We begin with the raw amino-acid sequence, 550 residues long: Chaperonin GroEL (550 aa).

Residues threonine 30–proline 33, lysine 51, aspartate 87–threonine 91, glycine 415, asparagine 479–alanine 481, and aspartate 495 each bind ATP. A disordered region spans residues lysine 526–methionine 550. Residues glycine 541 to methionine 550 show a composition bias toward gly residues.

The protein belongs to the chaperonin (HSP60) family. In terms of assembly, forms a cylinder of 14 subunits composed of two heptameric rings stacked back-to-back. Interacts with the co-chaperonin GroES.

The protein localises to the cytoplasm. The catalysed reaction is ATP + H2O + a folded polypeptide = ADP + phosphate + an unfolded polypeptide.. Functionally, together with its co-chaperonin GroES, plays an essential role in assisting protein folding. The GroEL-GroES system forms a nano-cage that allows encapsulation of the non-native substrate proteins and provides a physical environment optimized to promote and accelerate protein folding. This chain is Chaperonin GroEL, found in Buchnera aphidicola subsp. Baizongia pistaciae (strain Bp).